Consider the following 246-residue polypeptide: Pyridoxine 5'-phosphate synthase (246 aa).

Residue N6 coordinates 3-amino-2-oxopropyl phosphate. 1-deoxy-D-xylulose 5-phosphate is bound at residue D8 to H9. R17 contacts 3-amino-2-oxopropyl phosphate. Catalysis depends on H49, which acts as the Proton acceptor. The 1-deoxy-D-xylulose 5-phosphate site is built by R51 and H56. The active-site Proton acceptor is the E76. Position 106 (T106) interacts with 1-deoxy-D-xylulose 5-phosphate. H196 (proton donor) is an active-site residue. Residues G197 and G219–H220 each bind 3-amino-2-oxopropyl phosphate.

Belongs to the PNP synthase family. As to quaternary structure, homooctamer; tetramer of dimers.

It localises to the cytoplasm. It carries out the reaction 3-amino-2-oxopropyl phosphate + 1-deoxy-D-xylulose 5-phosphate = pyridoxine 5'-phosphate + phosphate + 2 H2O + H(+). It functions in the pathway cofactor biosynthesis; pyridoxine 5'-phosphate biosynthesis; pyridoxine 5'-phosphate from D-erythrose 4-phosphate: step 5/5. Catalyzes the complicated ring closure reaction between the two acyclic compounds 1-deoxy-D-xylulose-5-phosphate (DXP) and 3-amino-2-oxopropyl phosphate (1-amino-acetone-3-phosphate or AAP) to form pyridoxine 5'-phosphate (PNP) and inorganic phosphate. The sequence is that of Pyridoxine 5'-phosphate synthase from Akkermansia muciniphila (strain ATCC BAA-835 / DSM 22959 / JCM 33894 / BCRC 81048 / CCUG 64013 / CIP 107961 / Muc).